A 614-amino-acid polypeptide reads, in one-letter code: Zinc metalloproteinase-disintegrin-like VLAIP-B (614 aa).

The signal sequence occupies residues 1 to 20 (MMQVLLVTICLAVFPYQGSS). The propeptide occupies 21–193 (IILESGNVND…KASQLNLTPE (173 aa)). Gln-194 is subject to Pyrrolidone carboxylic acid. One can recognise a Peptidase M12B domain in the interval 202 to 398 (KYVELVIVAD…KMPQCILNKP (197 aa)). Residue Glu-205 participates in Ca(2+) binding. N-linked (GlcNAc...) asparagine glycosylation is present at Asn-262. Asp-289 lines the Ca(2+) pocket. Cystine bridges form between Cys-313–Cys-393, Cys-353–Cys-377, and Cys-355–Cys-360. His-338 is a binding site for Zn(2+). Residue Glu-339 is part of the active site. Zn(2+)-binding residues include His-342 and His-348. 8 residues coordinate Ca(2+): Cys-393, Asn-396, Val-408, Asn-411, Phe-413, Glu-415, Glu-418, and Asp-421. The Disintegrin domain maps to 406-492 (PAVCGNYFVE…ECPTDQFQRN (87 aa)). Disulfide bonds link Cys-409-Cys-438, Cys-420-Cys-433, Cys-422-Cys-428, Cys-432-Cys-455, Cys-446-Cys-452, Cys-451-Cys-477, Cys-464-Cys-484, Cys-471-Cys-503, Cys-496-Cys-508, Cys-515-Cys-565, Cys-530-Cys-576, Cys-543-Cys-553, Cys-560-Cys-602, and Cys-596-Cys-607. The short motif at 470–472 (ECD) is the D/ECD-tripeptide element. 3 N-linked (GlcNAc...) asparagine glycosylation sites follow: Asn-505, Asn-547, and Asn-568.

This sequence belongs to the venom metalloproteinase (M12B) family. P-III subfamily. P-IIIc sub-subfamily. Heterodimer; disulfide-linked. Zn(2+) is required as a cofactor. The N-terminus is blocked. As to expression, expressed by the venom gland.

It is found in the secreted. Inhibited by EDTA or 1,10-phenanthroline. Not inhibited by PMSF. Functionally, this metalloproteinase hydrolyzes azocasein, and insulin B-chain (at the '38-Ala-|-Leu-39' bond). Also hydrolyzes the Aalpha-chain (FGA) and more slowly the Bbeta-chain of fibrinogen (FGB), without affecting the gamma-chain. Cleaves alpha-chain of fibrinogen at '432-Lys-|-Leu-433' and '535-Pro-|-Met-536' bonds. Does not cleave fibrin. Inhibits endothelial cell adhesion to extracellular matrix proteins such as fibrinogen, fibronectin, vitronectin, collagen I, and collagen IV. Induces apoptosis in vascular endothelial cells. This chain is Zinc metalloproteinase-disintegrin-like VLAIP-B, found in Macrovipera lebetinus (Levantine viper).